Here is a 159-residue protein sequence, read N- to C-terminus: Transcriptional repressor NrdR (159 aa).

The segment at 3–34 (CPFCEYNGTRVLDSRPFNHNKSIRRRRECEAC) is a zinc-finger region. Positions 49-139 (LLIVKKDGTR…VYRQFKDINV (91 aa)) constitute an ATP-cone domain.

This sequence belongs to the NrdR family. Zn(2+) serves as cofactor.

Negatively regulates transcription of bacterial ribonucleotide reductase nrd genes and operons by binding to NrdR-boxes. The chain is Transcriptional repressor NrdR from Brevibacillus brevis (strain 47 / JCM 6285 / NBRC 100599).